A 219-amino-acid polypeptide reads, in one-letter code: NAD(P)H-quinone oxidoreductase subunit K 2 (219 aa).

Residues Cys53, Cys54, Cys118, and Cys149 each coordinate [4Fe-4S] cluster.

The protein belongs to the complex I 20 kDa subunit family. In terms of assembly, NDH-1 can be composed of about 15 different subunits; different subcomplexes with different compositions have been identified which probably have different functions. [4Fe-4S] cluster serves as cofactor.

It is found in the cellular thylakoid membrane. It carries out the reaction a plastoquinone + NADH + (n+1) H(+)(in) = a plastoquinol + NAD(+) + n H(+)(out). The enzyme catalyses a plastoquinone + NADPH + (n+1) H(+)(in) = a plastoquinol + NADP(+) + n H(+)(out). In terms of biological role, NDH-1 shuttles electrons from an unknown electron donor, via FMN and iron-sulfur (Fe-S) centers, to quinones in the respiratory and/or the photosynthetic chain. The immediate electron acceptor for the enzyme in this species is believed to be plastoquinone. Couples the redox reaction to proton translocation, and thus conserves the redox energy in a proton gradient. Cyanobacterial NDH-1 also plays a role in inorganic carbon-concentration. This Synechocystis sp. (strain ATCC 27184 / PCC 6803 / Kazusa) protein is NAD(P)H-quinone oxidoreductase subunit K 2.